A 218-amino-acid chain; its full sequence is Ribonuclease T (218 aa).

Residues 24–198 (VIIDVETAGF…YDAERTAELF (175 aa)) enclose the Exonuclease domain. Asp27, Glu29, His185, and Asp190 together coordinate Mg(2+). The active-site Proton donor/acceptor is the His185.

This sequence belongs to the RNase T family. In terms of assembly, homodimer. The cofactor is Mg(2+).

Trims short 3' overhangs of a variety of RNA species, leaving a one or two nucleotide 3' overhang. Responsible for the end-turnover of tRNA: specifically removes the terminal AMP residue from uncharged tRNA (tRNA-C-C-A). Also appears to be involved in tRNA biosynthesis. The protein is Ribonuclease T of Histophilus somni (strain 129Pt) (Haemophilus somnus).